The following is a 126-amino-acid chain: Large ribosomal subunit protein bL12c (126 aa).

This sequence belongs to the bacterial ribosomal protein bL12 family. As to quaternary structure, homodimer. Part of the ribosomal stalk of the 50S ribosomal subunit. Forms a multimeric L10(L12)X complex, where L10 forms an elongated spine to which 2 to 4 L12 dimers bind in a sequential fashion. Binds GTP-bound translation factors.

The protein localises to the plastid. Its subcellular location is the cyanelle. Functionally, forms part of the ribosomal stalk which helps the ribosome interact with GTP-bound translation factors. Is thus essential for accurate translation. In Cyanophora paradoxa, this protein is Large ribosomal subunit protein bL12c.